The chain runs to 355 residues: Tetraacyldisaccharide 4'-kinase (355 aa).

An ATP-binding site is contributed by 54 to 61; the sequence is TVGGAGKT.

It belongs to the LpxK family.

The enzyme catalyses a lipid A disaccharide + ATP = a lipid IVA + ADP + H(+). It participates in glycolipid biosynthesis; lipid IV(A) biosynthesis; lipid IV(A) from (3R)-3-hydroxytetradecanoyl-[acyl-carrier-protein] and UDP-N-acetyl-alpha-D-glucosamine: step 6/6. In terms of biological role, transfers the gamma-phosphate of ATP to the 4'-position of a tetraacyldisaccharide 1-phosphate intermediate (termed DS-1-P) to form tetraacyldisaccharide 1,4'-bis-phosphate (lipid IVA). This is Tetraacyldisaccharide 4'-kinase from Rhizobium rhizogenes (strain K84 / ATCC BAA-868) (Agrobacterium radiobacter).